Consider the following 316-residue polypeptide: 1-aminocyclopropane-1-carboxylate oxidase 2 (316 aa).

Residues 153–253 (PNFGTKVSNY…RMSLASFYNP (101 aa)) form the Fe2OG dioxygenase domain. His177, Asp179, and His234 together coordinate Fe cation.

Belongs to the iron/ascorbate-dependent oxidoreductase family. Fe cation serves as cofactor. As to expression, leaves.

The enzyme catalyses 1-aminocyclopropane-1-carboxylate + L-ascorbate + O2 = ethene + L-dehydroascorbate + hydrogen cyanide + CO2 + 2 H2O. The protein operates within alkene biosynthesis; ethylene biosynthesis via S-adenosyl-L-methionine; ethylene from S-adenosyl-L-methionine: step 2/2. This is 1-aminocyclopropane-1-carboxylate oxidase 2 (ACO2) from Solanum lycopersicum (Tomato).